The sequence spans 518 residues: Beta-secretase 2 (518 aa).

The N-terminal stretch at 1–20 (MGALARALLLPLLAQWLLRA) is a signal peptide. Positions 21 to 62 (APELAPAPFTLPLRVAAATNRVVAPTPGPGTPAERHADGLAL) are excised as a propeptide. The Extracellular portion of the chain corresponds to 21-473 (APELAPAPFT…SEPILWIVSY (453 aa)). The region spanning 92–429 (YYLEMLIGTP…DRAQKRVGFA (338 aa)) is the Peptidase A1 domain. The active site involves Asp110. N-linked (GlcNAc...) asparagine glycosylation is present at Asn170. Intrachain disulfides connect Cys233–Cys433, Cys292–Cys457, and Cys344–Cys393. Asp303 is a catalytic residue. Asn366 carries an N-linked (GlcNAc...) asparagine glycan. Residues 474–494 (ALMSVCGAILLVLIVLLLLPF) traverse the membrane as a helical segment. The Cytoplasmic segment spans residues 495 to 518 (RCQRRPRDPEVVNDESSLVRHRWK).

It belongs to the peptidase A1 family. Monomer. Interacts with RTN3 and RTN4. Post-translationally, undergoes autoproteolytic cleavage. Glycosylated. Brain. Present in neurons within the hippocampus, frontal cortex and temporal cortex (at protein level). Expressed at low levels in most peripheral tissues and at higher levels in colon, kidney, pancreas, placenta, prostate, stomach and trachea. Expressed at low levels in the brain. Found in spinal cord, medulla oblongata, substantia nigra and locus coruleus. Expressed in the ductal epithelium of both normal and malignant prostate.

It is found in the cell membrane. The protein resides in the golgi apparatus. Its subcellular location is the endoplasmic reticulum. The protein localises to the endosome. It localises to the melanosome. The enzyme catalyses Broad endopeptidase specificity. Cleaves Glu-Val-Asn-Leu-|-Asp-Ala-Glu-Phe in the Swedish variant of Alzheimer's amyloid precursor protein.. In terms of biological role, responsible for the proteolytic processing of the amyloid precursor protein (APP). Cleaves APP, between residues 690 and 691, leading to the generation and extracellular release of beta-cleaved soluble APP, and a corresponding cell-associated C-terminal fragment which is later released by gamma-secretase. It has also been shown that it can cleave APP between residues 671 and 672. Involved in the proteolytic shedding of PMEL at early stages of melanosome biogenesis. Cleaves PMEL within the M-beta fragment to release the amyloidogenic PMEL luminal fragment containing M-alpha and a small portion of M-beta N-terminus. This is a prerequisite step for subsequent processing and assembly of PMEL fibrils into amyloid sheets. Responsible also for the proteolytic processing of CLTRN in pancreatic beta cells. This chain is Beta-secretase 2 (BACE2), found in Homo sapiens (Human).